A 963-amino-acid polypeptide reads, in one-letter code: Phosphoenolpyruvate carboxylase 2 (963 aa).

Serine 11 bears the Phosphoserine mark. Catalysis depends on residues histidine 172 and lysine 599. A Phosphoserine modification is found at serine 701.

Belongs to the PEPCase type 1 family. As to quaternary structure, homotetramer. It depends on Mg(2+) as a cofactor. Expressed in all plant organs, with higher levels in stems and leaves.

Its subcellular location is the cytoplasm. The enzyme catalyses oxaloacetate + phosphate = phosphoenolpyruvate + hydrogencarbonate. With respect to regulation, by light-reversible phosphorylation. Its function is as follows. Through the carboxylation of phosphoenolpyruvate (PEP) it forms oxaloacetate, a four-carbon dicarboxylic acid source for the tricarboxylic acid cycle. In Arabidopsis thaliana (Mouse-ear cress), this protein is Phosphoenolpyruvate carboxylase 2 (PPC2).